The chain runs to 159 residues: Cytochrome c-type biogenesis protein CcmE (159 aa).

The Cytoplasmic segment spans residues Met1–Arg8. Residues Leu9–Ala29 traverse the membrane as a helical; Signal-anchor for type II membrane protein segment. The Periplasmic segment spans residues Leu30–Ser159. Positions 130 and 134 each coordinate heme. The segment covering Glu132 to His147 has biased composition (basic and acidic residues). Residues Glu132–Ser159 are disordered.

It belongs to the CcmE/CycJ family.

Its subcellular location is the cell inner membrane. Functionally, heme chaperone required for the biogenesis of c-type cytochromes. Transiently binds heme delivered by CcmC and transfers the heme to apo-cytochromes in a process facilitated by CcmF and CcmH. In Escherichia coli (strain 55989 / EAEC), this protein is Cytochrome c-type biogenesis protein CcmE.